The chain runs to 206 residues: Transcription factor BTF3 (206 aa).

A disordered region spans residues M1–E42. R19 is modified (omega-N-methylarginine). S30 carries the post-translational modification Phosphoserine. N6-methyllysine is present on residues K46 and K54. Positions T82–L147 constitute an NAC-A/B domain. A Phosphothreonine modification is found at T160. Residues P170–N206 form a disordered region. The residue at position 173 (S173) is a Phosphoserine. The span at G183 to D198 shows a compositional bias: acidic residues.

The protein belongs to the NAC-beta family. As to quaternary structure, part of the nascent polypeptide-associated complex (NAC), which is a heterodimer of NACA and BTF3 (via NAC-A/B domains). NAC associates with ribosomes through the BTF3/NACB subunit. Both subunits can contact nascent polypeptide chains.

It is found in the cytoplasm. It localises to the nucleus. In terms of biological role, when associated with NACA, prevents inappropriate targeting of non-secretory polypeptides to the endoplasmic reticulum (ER). Binds to nascent polypeptide chains as they emerge from the ribosome and blocks their interaction with the signal recognition particle (SRP), which normally targets nascent secretory peptides to the ER. BTF3 is also a general transcription factor that can form a stable complex with RNA polymerase II. Required for the initiation of transcription. This Homo sapiens (Human) protein is Transcription factor BTF3 (BTF3).